The sequence spans 346 residues: Phosphoribosylformylglycinamidine cyclo-ligase (346 aa).

It belongs to the AIR synthase family.

Its subcellular location is the cytoplasm. It carries out the reaction 2-formamido-N(1)-(5-O-phospho-beta-D-ribosyl)acetamidine + ATP = 5-amino-1-(5-phospho-beta-D-ribosyl)imidazole + ADP + phosphate + H(+). The protein operates within purine metabolism; IMP biosynthesis via de novo pathway; 5-amino-1-(5-phospho-D-ribosyl)imidazole from N(2)-formyl-N(1)-(5-phospho-D-ribosyl)glycinamide: step 2/2. This Geobacillus thermodenitrificans (strain NG80-2) protein is Phosphoribosylformylglycinamidine cyclo-ligase.